The primary structure comprises 506 residues: Maturase K (506 aa).

Belongs to the intron maturase 2 family. MatK subfamily.

The protein localises to the plastid. The protein resides in the chloroplast. Functionally, usually encoded in the trnK tRNA gene intron. Probably assists in splicing its own and other chloroplast group II introns. In Medicago sativa (Alfalfa), this protein is Maturase K.